The sequence spans 155 residues: Probable ribosome biogenesis protein RLP24 (155 aa).

The protein belongs to the eukaryotic ribosomal protein eL24 family.

The polypeptide is Probable ribosome biogenesis protein RLP24 (RPL24) (Encephalitozoon cuniculi (strain GB-M1) (Microsporidian parasite)).